Here is a 268-residue protein sequence, read N- to C-terminus: 14-3-3-like protein GF14 iota (268 aa).

2 positions are modified to phosphoserine: Ser70 and Ser193. Residue Thr214 is modified to Phosphothreonine. Positions Asp240 to Asn268 are disordered. A compositionally biased stretch (basic and acidic residues) spans Asp248–Lys261.

The protein belongs to the 14-3-3 family. In terms of tissue distribution, expressed in flowers.

The protein localises to the nucleus. It is found in the cytoplasm. Functionally, is associated with a DNA binding complex that binds to the G box, a well-characterized cis-acting DNA regulatory element found in plant genes. The protein is 14-3-3-like protein GF14 iota of Arabidopsis thaliana (Mouse-ear cress).